The following is a 366-amino-acid chain: Adenine DNA glycosylase (366 aa).

Residue 30 to 31 participates in DNA binding; sequence WR. Glutamate 43 functions as the Proton donor/acceptor in the catalytic mechanism. DNA contacts are provided by residues 48–49, 86–88, tyrosine 126, and glutamate 188; these read QT and LGY. A HhH domain is found at 105-133; the sequence is RYGGKVPDDPDEFSRLKGVGPYTVGAVLS. Positions 198, 205, 208, and 214 each coordinate [4Fe-4S] cluster. Serine 308 contacts DNA.

This sequence belongs to the Nth/MutY family. It depends on [4Fe-4S] cluster as a cofactor.

It carries out the reaction Hydrolyzes free adenine bases from 7,8-dihydro-8-oxoguanine:adenine mismatched double-stranded DNA, leaving an apurinic site.. Functionally, base excision repair (BER) glycosylase that initiates repair of A:oxoG to C:G by removing the inappropriately paired adenine base from the DNA backbone, generating an abasic site product. 8-oxoguanine (oxoG) is a genotoxic DNA lesion resulting from oxidation of guanine; this residue is misread by replicative DNA polymerases, that insert adenine instead of cytosine opposite the oxidized damaged base. Shows a powerful dicrimination of A versus C, since it does not cleave cytosine in oxoG:C pairs. May also be able to remove adenine from A:G mispairs, although this activity may not be physiologically relevant. In Geobacillus stearothermophilus (Bacillus stearothermophilus), this protein is Adenine DNA glycosylase.